The following is a 323-amino-acid chain: Methenyltetrahydromethanopterin cyclohydrolase (323 aa).

It belongs to the MCH family.

It localises to the cytoplasm. It catalyses the reaction 5,10-methenyl-5,6,7,8-tetrahydromethanopterin + H2O = N(5)-formyl-5,6,7,8-tetrahydromethanopterin + H(+). It functions in the pathway one-carbon metabolism; methanogenesis from CO(2); 5,10-methenyl-5,6,7,8-tetrahydromethanopterin from CO(2): step 3/3. Functionally, catalyzes the reversible interconversion of 5-formyl-H(4)MPT to methenyl-H(4)MPT(+). This Methanococcus maripaludis (strain C5 / ATCC BAA-1333) protein is Methenyltetrahydromethanopterin cyclohydrolase.